A 247-amino-acid chain; its full sequence is Probable phosphatase Shew_1420 (247 aa).

Zn(2+)-binding residues include histidine 8, histidine 10, histidine 16, histidine 41, glutamate 74, histidine 102, histidine 132, aspartate 193, and histidine 195.

This sequence belongs to the PHP family. Requires Zn(2+) as cofactor.

The polypeptide is Probable phosphatase Shew_1420 (Shewanella loihica (strain ATCC BAA-1088 / PV-4)).